A 360-amino-acid polypeptide reads, in one-letter code: Photosystem II protein D1 3 (360 aa).

The next 3 helical transmembrane spans lie at 29–46 (YVGWFGVLMIPTLLAATV), 118–133 (HFLIGCACYLGRQWEL), and 142–156 (WICVAYSAPLASATA). His-118 contributes to the chlorophyll a binding site. Tyr-126 is a pheophytin a binding site. Positions 170 and 189 each coordinate [CaMn4O5] cluster. A helical membrane pass occupies residues 197 to 218 (FHMLGVAGVFGGSLFSAMHGSL). His-198 contacts chlorophyll a. Residues His-215 and 264 to 265 (SF) contribute to the a quinone site. Residue His-215 coordinates Fe cation. His-272 serves as a coordination point for Fe cation. A helical membrane pass occupies residues 274 to 288 (FLAAWPVIGIWFTAL). [CaMn4O5] cluster is bound by residues His-332, Glu-333, Asp-342, and Ala-344. Residues 345 to 360 (AGEVAPVALTAPAING) constitute a propeptide that is removed on maturation.

It belongs to the reaction center PufL/M/PsbA/D family. PSII is composed of 1 copy each of membrane proteins PsbA, PsbB, PsbC, PsbD, PsbE, PsbF, PsbH, PsbI, PsbJ, PsbK, PsbL, PsbM, PsbT, PsbX, PsbY, PsbZ, Psb30/Ycf12, peripheral proteins PsbO, CyanoQ (PsbQ), PsbU, PsbV and a large number of cofactors. It forms dimeric complexes. The D1/D2 heterodimer binds P680, chlorophylls that are the primary electron donor of PSII, and subsequent electron acceptors. It shares a non-heme iron and each subunit binds pheophytin, quinone, additional chlorophylls, carotenoids and lipids. D1 provides most of the ligands for the Mn4-Ca-O5 cluster of the oxygen-evolving complex (OEC). There is also a Cl(-1) ion associated with D1 and D2, which is required for oxygen evolution. The PSII complex binds additional chlorophylls, carotenoids and specific lipids. serves as cofactor. Post-translationally, tyr-161 forms a radical intermediate that is referred to as redox-active TyrZ, YZ or Y-Z. C-terminally processed by CtpA; processing is essential to allow assembly of the oxygen-evolving complex and thus photosynthetic growth.

The protein resides in the cellular thylakoid membrane. It catalyses the reaction 2 a plastoquinone + 4 hnu + 2 H2O = 2 a plastoquinol + O2. Photosystem II (PSII) is a light-driven water:plastoquinone oxidoreductase that uses light energy to abstract electrons from H(2)O, generating O(2) and a proton gradient subsequently used for ATP formation. It consists of a core antenna complex that captures photons, and an electron transfer chain that converts photonic excitation into a charge separation. The D1/D2 (PsbA/PsbD) reaction center heterodimer binds P680, the primary electron donor of PSII as well as several subsequent electron acceptors. This chain is Photosystem II protein D1 3, found in Trichormus variabilis (strain ATCC 29413 / PCC 7937) (Anabaena variabilis).